A 141-amino-acid polypeptide reads, in one-letter code: Large ribosomal subunit protein uL11 (141 aa).

Belongs to the universal ribosomal protein uL11 family. As to quaternary structure, part of the ribosomal stalk of the 50S ribosomal subunit. Interacts with L10 and the large rRNA to form the base of the stalk. L10 forms an elongated spine to which L12 dimers bind in a sequential fashion forming a multimeric L10(L12)X complex. Post-translationally, one or more lysine residues are methylated.

Forms part of the ribosomal stalk which helps the ribosome interact with GTP-bound translation factors. This chain is Large ribosomal subunit protein uL11, found in Clostridium novyi (strain NT).